The sequence spans 194 residues: MYIALEGIDTAGKSTQIELLKNEYKNNILFIKEPGFTKFGTKIREIIFNDDISKKAELFLFLADRAETIEKFVKPNLHKNILTDRSVISGIAYAMEFFDFNMLVNLNKFATDGIFPEFVIILKLDKETLQYRLSQKNHDNIEKRGLDYLINIQDNMIEVCNRLEIPYLLLDASKNIEEINFRIKKVISEYMDID.

7-14 (GIDTAGKS) serves as a coordination point for ATP.

The protein belongs to the thymidylate kinase family.

It catalyses the reaction dTMP + ATP = dTDP + ADP. Phosphorylation of dTMP to form dTDP in both de novo and salvage pathways of dTTP synthesis. The polypeptide is Thymidylate kinase (Nautilia profundicola (strain ATCC BAA-1463 / DSM 18972 / AmH)).